The sequence spans 325 residues: Germination protease (325 aa).

A propeptide spanning residues 1–7 is cleaved from the precursor; it reads MYNVRTD.

It belongs to the peptidase A25 family. As to quaternary structure, homotetramer. Autoproteolytically processed. The inactive tetrameric zymogen termed p46 autoprocesses to a smaller form termed p41, which is active only during spore germination.

It carries out the reaction Endopeptidase action with P4 Glu or Asp, P1 preferably Glu &gt; Asp, P1' hydrophobic and P2' Ala.. In terms of biological role, initiates the rapid degradation of small, acid-soluble proteins during spore germination. This is Germination protease from Clostridium perfringens (strain SM101 / Type A).